We begin with the raw amino-acid sequence, 276 residues long: Rhomboid protease GlpG (276 aa).

The next 6 helical transmembrane spans lie at 94-114, 142-162, 169-189, 192-212, 229-249, and 250-270; these read GPVTWVVMIACVVVFIAMQIL, ALMHFSLMHILFNLLWWWYLG, LGSGKLIVITLISALLSGYVQ, FSGPWFGGLSGVVYALMGYVW, LIIFALIWIVAGWFDLFGMSM, and ANGAHIAGLAVGLAMAFVDSL. Serine 201 acts as the Nucleophile in catalysis. The active site involves histidine 254.

This sequence belongs to the peptidase S54 family.

Its subcellular location is the cell inner membrane. It carries out the reaction Cleaves type-1 transmembrane domains using a catalytic dyad composed of serine and histidine that are contributed by different transmembrane domains.. In terms of biological role, rhomboid-type serine protease that catalyzes intramembrane proteolysis. The protein is Rhomboid protease GlpG of Escherichia coli (strain 55989 / EAEC).